We begin with the raw amino-acid sequence, 189 residues long: UPF0301 protein RMA_0049 (189 aa).

The protein belongs to the UPF0301 (AlgH) family.

The protein is UPF0301 protein RMA_0049 of Rickettsia massiliae (strain Mtu5).